The chain runs to 295 residues: N-acetylmuramic acid 6-phosphate etherase (295 aa).

Positions 54-217 (VIASFRQGGR…STASMIGIGK (164 aa)) constitute an SIS domain. Glutamate 82 (proton donor) is an active-site residue. Glutamate 113 is an active-site residue.

Belongs to the GCKR-like family. MurNAc-6-P etherase subfamily. In terms of assembly, homodimer.

The enzyme catalyses N-acetyl-D-muramate 6-phosphate + H2O = N-acetyl-D-glucosamine 6-phosphate + (R)-lactate. The protein operates within amino-sugar metabolism; N-acetylmuramate degradation. Specifically catalyzes the cleavage of the D-lactyl ether substituent of MurNAc 6-phosphate, producing GlcNAc 6-phosphate and D-lactate. In Geobacillus sp. (strain WCH70), this protein is N-acetylmuramic acid 6-phosphate etherase.